A 261-amino-acid polypeptide reads, in one-letter code: Indole-3-glycerol phosphate synthase (261 aa).

It belongs to the TrpC family.

It carries out the reaction 1-(2-carboxyphenylamino)-1-deoxy-D-ribulose 5-phosphate + H(+) = (1S,2R)-1-C-(indol-3-yl)glycerol 3-phosphate + CO2 + H2O. Its pathway is amino-acid biosynthesis; L-tryptophan biosynthesis; L-tryptophan from chorismate: step 4/5. The protein is Indole-3-glycerol phosphate synthase of Burkholderia ambifaria (strain MC40-6).